A 554-amino-acid polypeptide reads, in one-letter code: 3-(3-hydroxy-phenyl)propionate/3-hydroxycinnamic acid hydroxylase (554 aa).

Residues glutamine 17–lysine 46 and phenylalanine 285–aspartate 295 each bind FAD.

The protein belongs to the PheA/TfdB FAD monooxygenase family. The cofactor is FAD.

The catalysed reaction is 3-(3-hydroxyphenyl)propanoate + NADH + O2 + H(+) = 3-(2,3-dihydroxyphenyl)propanoate + NAD(+) + H2O. It catalyses the reaction (2E)-3-(3-hydroxyphenyl)prop-2-enoate + NADH + O2 + H(+) = (2E)-3-(2,3-dihydroxyphenyl)prop-2-enoate + NAD(+) + H2O. The protein operates within aromatic compound metabolism; 3-phenylpropanoate degradation. Its function is as follows. Catalyzes the insertion of one atom of molecular oxygen into position 2 of the phenyl ring of 3-(3-hydroxyphenyl)propionate (3-HPP) and hydroxycinnamic acid (3HCI). This is 3-(3-hydroxy-phenyl)propionate/3-hydroxycinnamic acid hydroxylase from Klebsiella pneumoniae subsp. pneumoniae (strain ATCC 700721 / MGH 78578).